Consider the following 280-residue polypeptide: Shikimate dehydrogenase (NADP(+)) (280 aa).

Shikimate is bound by residues 18-20 and Thr-65; that span reads SRS. Catalysis depends on Lys-69, which acts as the Proton acceptor. 2 residues coordinate shikimate: Asn-90 and Asp-105. Residues 130–134, 154–159, and Leu-219 contribute to the NADP(+) site; these read GAGGA and NRTLAR. Tyr-221 contacts shikimate. Position 242 (Gly-242) interacts with NADP(+).

This sequence belongs to the shikimate dehydrogenase family. In terms of assembly, homodimer.

It carries out the reaction shikimate + NADP(+) = 3-dehydroshikimate + NADPH + H(+). It functions in the pathway metabolic intermediate biosynthesis; chorismate biosynthesis; chorismate from D-erythrose 4-phosphate and phosphoenolpyruvate: step 4/7. In terms of biological role, involved in the biosynthesis of the chorismate, which leads to the biosynthesis of aromatic amino acids. Catalyzes the reversible NADPH linked reduction of 3-dehydroshikimate (DHSA) to yield shikimate (SA). The protein is Shikimate dehydrogenase (NADP(+)) of Mesorhizobium japonicum (strain LMG 29417 / CECT 9101 / MAFF 303099) (Mesorhizobium loti (strain MAFF 303099)).